The sequence spans 360 residues: Phospho-N-acetylmuramoyl-pentapeptide-transferase (360 aa).

Helical transmembrane passes span tyrosine 21 to glycine 41, threonine 73 to leucine 93, threonine 94 to valine 114, alanine 145 to phenylalanine 165, valine 168 to serine 188, glycine 199 to serine 219, alanine 236 to phenylalanine 256, valine 263 to isoleucine 283, isoleucine 288 to valine 308, and isoleucine 339 to isoleucine 359.

It belongs to the glycosyltransferase 4 family. MraY subfamily. Mg(2+) is required as a cofactor.

The protein resides in the cell inner membrane. The catalysed reaction is UDP-N-acetyl-alpha-D-muramoyl-L-alanyl-gamma-D-glutamyl-meso-2,6-diaminopimeloyl-D-alanyl-D-alanine + di-trans,octa-cis-undecaprenyl phosphate = di-trans,octa-cis-undecaprenyl diphospho-N-acetyl-alpha-D-muramoyl-L-alanyl-D-glutamyl-meso-2,6-diaminopimeloyl-D-alanyl-D-alanine + UMP. It participates in cell wall biogenesis; peptidoglycan biosynthesis. Its function is as follows. Catalyzes the initial step of the lipid cycle reactions in the biosynthesis of the cell wall peptidoglycan: transfers peptidoglycan precursor phospho-MurNAc-pentapeptide from UDP-MurNAc-pentapeptide onto the lipid carrier undecaprenyl phosphate, yielding undecaprenyl-pyrophosphoryl-MurNAc-pentapeptide, known as lipid I. This is Phospho-N-acetylmuramoyl-pentapeptide-transferase from Chromohalobacter salexigens (strain ATCC BAA-138 / DSM 3043 / CIP 106854 / NCIMB 13768 / 1H11).